We begin with the raw amino-acid sequence, 401 residues long: Probable N-acetyl-gamma-glutamyl-phosphate reductase, chloroplastic (401 aa).

Residues 1–48 constitute a chloroplast transit peptide; sequence MSTASAFSSIQGCWFKGERKIRVADKRAKRLTLGSHVASPSSMSFRVS. C205 is a catalytic residue.

The protein belongs to the NAGSA dehydrogenase family. Type 1 subfamily. In terms of assembly, homotetramer.

It is found in the plastid. Its subcellular location is the chloroplast. The catalysed reaction is N-acetyl-L-glutamate 5-semialdehyde + phosphate + NADP(+) = N-acetyl-L-glutamyl 5-phosphate + NADPH + H(+). It participates in amino-acid biosynthesis; L-arginine biosynthesis; N(2)-acetyl-L-ornithine from L-glutamate: step 3/4. The polypeptide is Probable N-acetyl-gamma-glutamyl-phosphate reductase, chloroplastic (Arabidopsis thaliana (Mouse-ear cress)).